A 311-amino-acid polypeptide reads, in one-letter code: tRNA (cytosine(49)-C(5))-methyltransferase (311 aa).

S-adenosyl-L-methionine contacts are provided by residues 118–124, Asp-142, Asp-169, and Asp-186; that span reads AAAPGSK. Cys-239 serves as the catalytic Nucleophile.

This sequence belongs to the class I-like SAM-binding methyltransferase superfamily. RsmB/NOP family. Forms a tripartite complex with archease and tRNA. Binds only the oligomeric forms of the archease.

Its subcellular location is the cytoplasm. The catalysed reaction is cytidine(49) in tRNA precursor + S-adenosyl-L-methionine = 5-methylcytidine(49) in tRNA precursor + S-adenosyl-L-homocysteine + H(+). With respect to regulation, substrate specificity and tendency to aggregate are influenced by archease. In terms of biological role, catalyzes AdoMet-dependent formation of m5C in tRNA. In the presence of protein archease, specifically methylates the cytosine at position 49 (m5C49) of tRNA. In the absence of archease, catalyzes the formation of m5C at many locations in tRNAs or rRNAs. The sequence is that of tRNA (cytosine(49)-C(5))-methyltransferase from Pyrococcus abyssi (strain GE5 / Orsay).